The sequence spans 452 residues: Bifunctional protein GlmU (452 aa).

The segment at 1 to 232 (MTGRSCLTIV…EDEVRGINTK (232 aa)) is pyrophosphorylase. UDP-N-acetyl-alpha-D-glucosamine contacts are provided by residues 11-14 (LAAG), Lys-25, Gln-78, and 83-84 (GT). Asp-108 contributes to the Mg(2+) binding site. UDP-N-acetyl-alpha-D-glucosamine is bound by residues Gly-144, Glu-158, Asn-173, and Asn-230. Asn-230 contacts Mg(2+). Residues 233–253 (AQLAEAEQVMQARLRKEALDA) are linker. The segment at 254 to 452 (GVTMVAPDTV…KLLAKKPKTG (199 aa)) is N-acetyltransferase. Residues Arg-319 and Lys-337 each coordinate UDP-N-acetyl-alpha-D-glucosamine. His-349 acts as the Proton acceptor in catalysis. Tyr-352 and Asn-363 together coordinate UDP-N-acetyl-alpha-D-glucosamine. Acetyl-CoA is bound by residues Ala-366, 372–373 (NY), Ser-391, Ser-409, and Arg-426.

The protein in the N-terminal section; belongs to the N-acetylglucosamine-1-phosphate uridyltransferase family. It in the C-terminal section; belongs to the transferase hexapeptide repeat family. Homotrimer. Requires Mg(2+) as cofactor.

It localises to the cytoplasm. The catalysed reaction is alpha-D-glucosamine 1-phosphate + acetyl-CoA = N-acetyl-alpha-D-glucosamine 1-phosphate + CoA + H(+). It carries out the reaction N-acetyl-alpha-D-glucosamine 1-phosphate + UTP + H(+) = UDP-N-acetyl-alpha-D-glucosamine + diphosphate. It participates in nucleotide-sugar biosynthesis; UDP-N-acetyl-alpha-D-glucosamine biosynthesis; N-acetyl-alpha-D-glucosamine 1-phosphate from alpha-D-glucosamine 6-phosphate (route II): step 2/2. It functions in the pathway nucleotide-sugar biosynthesis; UDP-N-acetyl-alpha-D-glucosamine biosynthesis; UDP-N-acetyl-alpha-D-glucosamine from N-acetyl-alpha-D-glucosamine 1-phosphate: step 1/1. The protein operates within bacterial outer membrane biogenesis; LPS lipid A biosynthesis. In terms of biological role, catalyzes the last two sequential reactions in the de novo biosynthetic pathway for UDP-N-acetylglucosamine (UDP-GlcNAc). The C-terminal domain catalyzes the transfer of acetyl group from acetyl coenzyme A to glucosamine-1-phosphate (GlcN-1-P) to produce N-acetylglucosamine-1-phosphate (GlcNAc-1-P), which is converted into UDP-GlcNAc by the transfer of uridine 5-monophosphate (from uridine 5-triphosphate), a reaction catalyzed by the N-terminal domain. In Nitrobacter hamburgensis (strain DSM 10229 / NCIMB 13809 / X14), this protein is Bifunctional protein GlmU.